A 347-amino-acid polypeptide reads, in one-letter code: tRNA dimethylallyltransferase (347 aa).

Residue G20–T27 participates in ATP binding. T22–T27 contributes to the substrate binding site. 3 interaction with substrate tRNA regions span residues D45 to M48, Q169 to R173, and R275 to R280.

It belongs to the IPP transferase family. Monomer. Mg(2+) serves as cofactor.

The catalysed reaction is adenosine(37) in tRNA + dimethylallyl diphosphate = N(6)-dimethylallyladenosine(37) in tRNA + diphosphate. Catalyzes the transfer of a dimethylallyl group onto the adenine at position 37 in tRNAs that read codons beginning with uridine, leading to the formation of N6-(dimethylallyl)adenosine (i(6)A). In Marinobacter nauticus (strain ATCC 700491 / DSM 11845 / VT8) (Marinobacter aquaeolei), this protein is tRNA dimethylallyltransferase.